The primary structure comprises 41 residues: CTTGPCCRQCKLKPAGTTCWKTSLTSHYCTGKSCDCPLYPG.

Disulfide bonds link Cys-1–Cys-10, Cys-6–Cys-29, Cys-7–Cys-34, and Cys-19–Cys-36. The Disintegrin domain maps to 1-41; the sequence is CTTGPCCRQCKLKPAGTTCWKTSLTSHYCTGKSCDCPLYPG. Residues 21 to 23 carry the Cell attachment site; atypical (KTS) motif; that stretch reads KTS.

This sequence belongs to the disintegrin family. Short disintegrin subfamily. As to quaternary structure, monomer. In terms of tissue distribution, expressed by the venom gland.

Its subcellular location is the secreted. Is a potent and selective inhibitor of alpha-1/beta-1 (ITGA1/ITGB1) integrin. It blocks the adhesion of alpha-1/beta-1-expressing K562 cells to immobilized collagens IV and I with IC(50) of 2 and 0.5 nM, respectively. Potently inhibits angiogenesis in chicken and in mouse model and reduces tumor development by half. Is 25-fold less potent than viperistatin. The polypeptide is Disintegrin obtustatin (Macrovipera lebetina obtusa (Levant blunt-nosed viper)).